The chain runs to 443 residues: Probable glycine dehydrogenase (decarboxylating) subunit 1 (443 aa).

It belongs to the GcvP family. N-terminal subunit subfamily. In terms of assembly, the glycine cleavage system is composed of four proteins: P, T, L and H. In this organism, the P 'protein' is a heterodimer of two subunits.

The enzyme catalyses N(6)-[(R)-lipoyl]-L-lysyl-[glycine-cleavage complex H protein] + glycine + H(+) = N(6)-[(R)-S(8)-aminomethyldihydrolipoyl]-L-lysyl-[glycine-cleavage complex H protein] + CO2. The glycine cleavage system catalyzes the degradation of glycine. The P protein binds the alpha-amino group of glycine through its pyridoxal phosphate cofactor; CO(2) is released and the remaining methylamine moiety is then transferred to the lipoamide cofactor of the H protein. The sequence is that of Probable glycine dehydrogenase (decarboxylating) subunit 1 from Oleidesulfovibrio alaskensis (strain ATCC BAA-1058 / DSM 17464 / G20) (Desulfovibrio alaskensis).